A 254-amino-acid chain; its full sequence is L-erythrulose-1-phosphate isomerase (254 aa).

His97 serves as the catalytic Electrophile. The active-site Proton acceptor is Glu170. Gly176 and Ser213 together coordinate substrate.

Belongs to the triosephosphate isomerase family. As to quaternary structure, homodimer.

It localises to the cytoplasm. The catalysed reaction is L-erythrulose 1-phosphate = D-erythrulose 4-phosphate. The protein operates within carbohydrate metabolism; erythritol degradation. Functionally, catalyzes the isomerization of D-erythrulose-4P to L-erythrulose-1P. The polypeptide is L-erythrulose-1-phosphate isomerase (Mesorhizobium japonicum (strain LMG 29417 / CECT 9101 / MAFF 303099) (Mesorhizobium loti (strain MAFF 303099))).